Consider the following 620-residue polypeptide: Transcription factor GTE11 (620 aa).

The segment at 1–35 is disordered; the sequence is MTVRNGGFPGDYNRNSFDSPGGCDDSPNASKDDET. A Bromo domain is found at 124–230; it reads TSTMLRMKQC…KFFEVRWKTI (107 aa). The NET domain maps to 270–351; that stretch reads NSLLEPAKRV…EFLRENQKKD (82 aa). Position 417 is a phosphoserine (Ser-417). Residues 445–620 form a transcription activation domain region; sequence EKRYRAALLK…GNEVEEGEID (176 aa). The stretch at 470–544 forms a coiled coil; it reads NQNEKRDPET…MEKSVEINEN (75 aa). 2 disordered regions span residues 491 to 511 and 597 to 620; these read KKKE…ARRK and EDED…GEID.

Interacts with BT1, BT2 and BT4.

The protein localises to the nucleus. This Arabidopsis thaliana (Mouse-ear cress) protein is Transcription factor GTE11 (GTE11).